The primary structure comprises 250 residues: 1-(5-phosphoribosyl)-5-[(5-phosphoribosylamino)methylideneamino] imidazole-4-carboxamide isomerase (250 aa).

Asp-8 serves as the catalytic Proton acceptor. Asp-131 serves as the catalytic Proton donor.

This sequence belongs to the HisA/HisF family.

Its subcellular location is the cytoplasm. The enzyme catalyses 1-(5-phospho-beta-D-ribosyl)-5-[(5-phospho-beta-D-ribosylamino)methylideneamino]imidazole-4-carboxamide = 5-[(5-phospho-1-deoxy-D-ribulos-1-ylimino)methylamino]-1-(5-phospho-beta-D-ribosyl)imidazole-4-carboxamide. Its pathway is amino-acid biosynthesis; L-histidine biosynthesis; L-histidine from 5-phospho-alpha-D-ribose 1-diphosphate: step 4/9. In Paraburkholderia phymatum (strain DSM 17167 / CIP 108236 / LMG 21445 / STM815) (Burkholderia phymatum), this protein is 1-(5-phosphoribosyl)-5-[(5-phosphoribosylamino)methylideneamino] imidazole-4-carboxamide isomerase.